A 1293-amino-acid polypeptide reads, in one-letter code: DNA-directed RNA polymerase subunit beta' (1293 aa).

The Zn(2+) site is built by C60, C62, C75, and C78. Residues D535, D537, and D539 each contribute to the Mg(2+) site. Zn(2+) contacts are provided by C877, C953, C960, and C963.

This sequence belongs to the RNA polymerase beta' chain family. The RNAP catalytic core consists of 2 alpha, 1 beta, 1 beta' and 1 omega subunit. When a sigma factor is associated with the core the holoenzyme is formed, which can initiate transcription. Requires Mg(2+) as cofactor. Zn(2+) is required as a cofactor.

It catalyses the reaction RNA(n) + a ribonucleoside 5'-triphosphate = RNA(n+1) + diphosphate. Functionally, DNA-dependent RNA polymerase catalyzes the transcription of DNA into RNA using the four ribonucleoside triphosphates as substrates. The polypeptide is DNA-directed RNA polymerase subunit beta' (Kineococcus radiotolerans (strain ATCC BAA-149 / DSM 14245 / SRS30216)).